A 233-amino-acid chain; its full sequence is Large ribosomal subunit protein uL1 (233 aa).

It belongs to the universal ribosomal protein uL1 family. In terms of assembly, part of the 50S ribosomal subunit.

Binds directly to 23S rRNA. The L1 stalk is quite mobile in the ribosome, and is involved in E site tRNA release. Its function is as follows. Protein L1 is also a translational repressor protein, it controls the translation of the L11 operon by binding to its mRNA. In Shewanella amazonensis (strain ATCC BAA-1098 / SB2B), this protein is Large ribosomal subunit protein uL1.